Here is a 461-residue protein sequence, read N- to C-terminus: E3 ubiquitin-protein ligase TRIM15 (461 aa).

The segment at 12–57 adopts an RING-type zinc-finger fold; the sequence is CSDCQGRLEDAVTAACGHTFCRLCLPLPPQMGAQPSSRVLLCPVCQ. Residues 74–115 form a B box-type zinc finger; it reads LGETYCEEHGEKIYFFCENDAEFLCVFCREGPSHQAHAVGFL. Positions 79, 82, 101, and 107 each coordinate Zn(2+). A coiled-coil region spans residues 123-230; that stretch reads RDRLRGRLEA…EKCQQPASEL (108 aa). The B30.2/SPRY domain maps to 272–461; that stretch reads EMLRAFSENL…KKGSCLTLKG (190 aa).

It belongs to the TRIM/RBCC family. As to quaternary structure, interacts with paxillin/PXN; this interaction recruits TRIM15 to focal adhesions. Interacts with TRIM8; this interaction prevents TRIM8 cytoplasmic translocation.

It is found in the cytoplasm. The protein resides in the nucleus. It localises to the cell junction. The protein localises to the focal adhesion. It catalyses the reaction S-ubiquitinyl-[E2 ubiquitin-conjugating enzyme]-L-cysteine + [acceptor protein]-L-lysine = [E2 ubiquitin-conjugating enzyme]-L-cysteine + N(6)-ubiquitinyl-[acceptor protein]-L-lysine.. E3 ubiquitin ligase that plays a role in several processes including innate antiviral immnity, cell migration and chemotaxis. Acts as a 'Lys-63'-specific ubiquitin ligase for MAPK1/ERK2 and MAPK3/ERK1, promoting their activation by facilitating their interaction with MAP2K1 and MAP2K2. Also plays a role in cell migration and chemotaxis by acting as a stable focal adhesion component upon recruitment by multi-adapter protein paxillin/PXN. Functions in the RIGI-mediated interferon induction pathway upstream or at the level of MAVS. Inhibits NF-kappa-B activation by turnover of 'Lys-63'-linked ubiquitination of MAP3K7/TAK1. Mechanistically, prevents TRIM8 cytoplasmic translocation and thus inhibits TRIM8-mediated 'Lys-63'-linked polyubiquitination of MAP3K7/TAK1 in the cytoplasm. Also has an important regulatory effect on the activation of hepatic stellate cells (HSCs). The polypeptide is E3 ubiquitin-protein ligase TRIM15 (TRIM15) (Sus scrofa (Pig)).